The chain runs to 76 residues: Conopeptide X11.1 (76 aa).

Positions methionine 1–glycine 20 are cleaved as a signal peptide. The propeptide occupies glutamate 21–arginine 39. 4 disulfide bridges follow: cysteine 42-cysteine 56, cysteine 49-cysteine 61, cysteine 55-cysteine 66, and cysteine 60-cysteine 73.

As to expression, expressed by the venom duct.

The protein localises to the secreted. Functionally, antimicrobial peptide that potently inhibits growth of Mycobacterium tuberculosis (H37Rv strain) (MIC=3 uM). The sequence is that of Conopeptide X11.1 from Conasprella ximenes (Interrupted cone).